The following is a 208-amino-acid chain: Redox-sensing transcriptional repressor Rex (208 aa).

A DNA-binding region (H-T-H motif) is located at residues 15-54 (SYYMCLERLLDEGVEVVSSEELARRLDLKASQIRKDLSYF). 89 to 94 (GAGNIG) is an NAD(+) binding site.

Belongs to the transcriptional regulatory Rex family. As to quaternary structure, homodimer.

Its subcellular location is the cytoplasm. Modulates transcription in response to changes in cellular NADH/NAD(+) redox state. In Thermotoga petrophila (strain ATCC BAA-488 / DSM 13995 / JCM 10881 / RKU-1), this protein is Redox-sensing transcriptional repressor Rex.